The sequence spans 111 residues: uncharacterized protein (111 aa).

The protein belongs to the SUI1 family.

This is an uncharacterized protein from Synechocystis sp. (strain ATCC 27184 / PCC 6803 / Kazusa).